The sequence spans 30 residues: Cycloviolacin-O10 (30 aa).

The segment at residues 1 to 30 is a cross-link (cyclopeptide (Gly-Asn)); the sequence is GIPCGESCVYIPCLTSAVGCSCKSKVCYRN. 3 cysteine pairs are disulfide-bonded: C4/C20, C8/C22, and C13/C27.

Post-translationally, this is a cyclic peptide. Expressed in petals and roots but not in leaves, petioles and runners (at protein level).

In terms of biological role, probably participates in a plant defense mechanism. The protein is Cycloviolacin-O10 of Viola odorata (Sweet violet).